Consider the following 473-residue polypeptide: Protein nucleotidyltransferase YdiU (473 aa).

ATP-binding residues include G79, G81, R82, K102, D114, G115, R165, and R172. D241 functions as the Proton acceptor in the catalytic mechanism. N242 and D251 together coordinate Mg(2+). D251 contributes to the ATP binding site.

Belongs to the SELO family. Mg(2+) is required as a cofactor. Requires Mn(2+) as cofactor.

It carries out the reaction L-seryl-[protein] + ATP = 3-O-(5'-adenylyl)-L-seryl-[protein] + diphosphate. The enzyme catalyses L-threonyl-[protein] + ATP = 3-O-(5'-adenylyl)-L-threonyl-[protein] + diphosphate. The catalysed reaction is L-tyrosyl-[protein] + ATP = O-(5'-adenylyl)-L-tyrosyl-[protein] + diphosphate. It catalyses the reaction L-histidyl-[protein] + UTP = N(tele)-(5'-uridylyl)-L-histidyl-[protein] + diphosphate. It carries out the reaction L-seryl-[protein] + UTP = O-(5'-uridylyl)-L-seryl-[protein] + diphosphate. The enzyme catalyses L-tyrosyl-[protein] + UTP = O-(5'-uridylyl)-L-tyrosyl-[protein] + diphosphate. In terms of biological role, nucleotidyltransferase involved in the post-translational modification of proteins. It can catalyze the addition of adenosine monophosphate (AMP) or uridine monophosphate (UMP) to a protein, resulting in modifications known as AMPylation and UMPylation. This Marinomonas sp. (strain MWYL1) protein is Protein nucleotidyltransferase YdiU.